Here is an 89-residue protein sequence, read N- to C-terminus: Small ribosomal subunit protein uS15 (89 aa).

This sequence belongs to the universal ribosomal protein uS15 family. Part of the 30S ribosomal subunit. Forms a bridge to the 50S subunit in the 70S ribosome, contacting the 23S rRNA.

Its function is as follows. One of the primary rRNA binding proteins, it binds directly to 16S rRNA where it helps nucleate assembly of the platform of the 30S subunit by binding and bridging several RNA helices of the 16S rRNA. In terms of biological role, forms an intersubunit bridge (bridge B4) with the 23S rRNA of the 50S subunit in the ribosome. This is Small ribosomal subunit protein uS15 from Chlorobium luteolum (strain DSM 273 / BCRC 81028 / 2530) (Pelodictyon luteolum).